A 188-amino-acid chain; its full sequence is dCTP deaminase (188 aa).

Residues 111-116 (KSTYAR), 135-137 (TLE), Gln-156, Tyr-170, Lys-179, and Gln-180 contribute to the dCTP site. Residue Glu-137 is the Proton donor/acceptor of the active site.

Belongs to the dCTP deaminase family. Homotrimer.

It carries out the reaction dCTP + H2O + H(+) = dUTP + NH4(+). It functions in the pathway pyrimidine metabolism; dUMP biosynthesis; dUMP from dCTP (dUTP route): step 1/2. Catalyzes the deamination of dCTP to dUTP. In Rickettsia akari (strain Hartford), this protein is dCTP deaminase.